We begin with the raw amino-acid sequence, 532 residues long: Glucose-6-phosphate isomerase (532 aa).

The active-site Proton donor is the E330. Catalysis depends on residues H359 and K461.

Belongs to the GPI family.

The protein resides in the cytoplasm. It catalyses the reaction alpha-D-glucose 6-phosphate = beta-D-fructose 6-phosphate. It functions in the pathway carbohydrate biosynthesis; gluconeogenesis. The protein operates within carbohydrate degradation; glycolysis; D-glyceraldehyde 3-phosphate and glycerone phosphate from D-glucose: step 2/4. In terms of biological role, catalyzes the reversible isomerization of glucose-6-phosphate to fructose-6-phosphate. The chain is Glucose-6-phosphate isomerase from Synechococcus sp. (strain CC9605).